Here is a 284-residue protein sequence, read N- to C-terminus: Putative ABC transporter ATP-binding protein PH1815 (284 aa).

Residues 4–244 enclose the ABC transporter domain; sequence IEVEDVSFRY…VEFLRTIGVK (241 aa). 38-45 is an ATP binding site; that stretch reads GPSGSGKS.

Belongs to the ABC transporter superfamily.

The protein resides in the cell membrane. Its function is as follows. Probably part of an ABC transporter complex. Responsible for energy coupling to the transport system. The sequence is that of Putative ABC transporter ATP-binding protein PH1815 from Pyrococcus horikoshii (strain ATCC 700860 / DSM 12428 / JCM 9974 / NBRC 100139 / OT-3).